The sequence spans 139 residues: Putative pre-16S rRNA nuclease (139 aa).

It belongs to the YqgF nuclease family.

The protein resides in the cytoplasm. Functionally, could be a nuclease involved in processing of the 5'-end of pre-16S rRNA. In Haemophilus influenzae (strain PittEE), this protein is Putative pre-16S rRNA nuclease.